A 354-amino-acid polypeptide reads, in one-letter code: MGCTLSAEERAAMERSKAIEKNLKEDGMQAAKDIKLLLLGAGESGKSTIVKQMKIIHEGGFTSEDTKQYKPVVYSNTIQSLVAIIRAMGTLSIPFGDNERESDAKMVLDVIARMEDTEPFSEELLAAMKRLWVDSGVQECLGRANEYQLNDSAKYFLDDLDRLGAKDYMPTEQDILRTRVKTTGIVEVHFSFKNLNFKLFDVGGQRSERKKWIHCFEDVTAIIFCVAMSEYDQVLHEDETTNRMQESLKLFDSICNNKWFTETSIILFLNKKDLFEEKIKKSPLTICFPEYTGKQMYQEASAYIQAQFEAKNKSSAKEIYCHQTCATDTNNIQFVFDAVTDVIIANNLRGCGLY.

Residue Gly2 is the site of N-myristoyl glycine attachment. Cys3 is lipidated: S-palmitoyl cysteine. Residues 32–354 (KDIKLLLLGA…ANNLRGCGLY (323 aa)) enclose the G-alpha domain. The tract at residues 35 to 48 (KLLLLGAGESGKST) is G1 motif. GTP-binding positions include 40–47 (GAGESGKS), 176–182 (LRTRVKT), 201–205 (DVGGQ), 270–273 (NKKD), and Ala326. The Mg(2+) site is built by Ser47 and Thr182. The tract at residues 174-182 (DILRTRVKT) is G2 motif. A G3 motif region spans residues 197-206 (FKLFDVGGQR). The G4 motif stretch occupies residues 266–273 (ILFLNKKD). Positions 324–329 (TCATDT) are G5 motif.

It belongs to the G-alpha family. G(i/o/t/z) subfamily. In terms of assembly, g proteins are composed of 3 units; alpha, beta and gamma. The alpha chain contains the guanine nucleotide binding site.

In terms of biological role, guanine nucleotide-binding proteins (G proteins) are involved as modulators or transducers in various transmembrane signaling systems. The G(o) protein function is not clear. This Planorbella trivolvis (Marsh rams-horn) protein is Guanine nucleotide-binding protein G(o) subunit alpha.